Consider the following 219-residue polypeptide: Adenylate kinase (219 aa).

ATP is bound at residue 13 to 18; it reads GAGKGT. The segment at 33 to 62 is NMP; that stretch reads STGDIFRAAIKNETKMGLEAKKYIDAGNLV. AMP is bound by residues Thr-34, Arg-39, 60-62, 88-91, and Gln-95; these read NLV and GYPR. The tract at residues 129-167 is LID; sequence GRFICRTCGATYHKLYNKPKVEGTCDVCGGHDFYQRDDD. Arg-130 is an ATP binding site. Residues Cys-133 and Cys-136 each coordinate Zn(2+). 139-140 is an ATP binding site; sequence TY. The Zn(2+) site is built by Cys-153 and Cys-156. AMP-binding residues include Arg-164 and Arg-175. Residue Arg-203 participates in ATP binding.

The protein belongs to the adenylate kinase family. In terms of assembly, monomer.

The protein localises to the cytoplasm. It carries out the reaction AMP + ATP = 2 ADP. Its pathway is purine metabolism; AMP biosynthesis via salvage pathway; AMP from ADP: step 1/1. In terms of biological role, catalyzes the reversible transfer of the terminal phosphate group between ATP and AMP. Plays an important role in cellular energy homeostasis and in adenine nucleotide metabolism. This chain is Adenylate kinase, found in Lactiplantibacillus plantarum (strain ATCC BAA-793 / NCIMB 8826 / WCFS1) (Lactobacillus plantarum).